A 331-amino-acid polypeptide reads, in one-letter code: Protoheme IX farnesyltransferase (331 aa).

Helical transmembrane passes span 63-83 (LACT…LNCL), 109-129 (SVFI…VSGV), 132-152 (LAAG…TAFL), 160-180 (IVFG…AAAG), 188-208 (WLFS…AILL), 215-235 (VGIP…AISV), 241-261 (VFLS…YGIL), and 294-314 (ILYM…VSIV).

This sequence belongs to the UbiA prenyltransferase family. Protoheme IX farnesyltransferase subfamily.

The protein resides in the cell inner membrane. It catalyses the reaction heme b + (2E,6E)-farnesyl diphosphate + H2O = Fe(II)-heme o + diphosphate. The protein operates within porphyrin-containing compound metabolism; heme O biosynthesis; heme O from protoheme: step 1/1. Functionally, converts heme B (protoheme IX) to heme O by substitution of the vinyl group on carbon 2 of heme B porphyrin ring with a hydroxyethyl farnesyl side group. The polypeptide is Protoheme IX farnesyltransferase (Prochlorococcus marinus (strain NATL1A)).